A 153-amino-acid polypeptide reads, in one-letter code: 3-hydroxyacyl-[acyl-carrier-protein] dehydratase FabZ (153 aa).

The active site involves His54.

The protein belongs to the thioester dehydratase family. FabZ subfamily.

The protein localises to the cytoplasm. The enzyme catalyses a (3R)-hydroxyacyl-[ACP] = a (2E)-enoyl-[ACP] + H2O. Its function is as follows. Involved in unsaturated fatty acids biosynthesis. Catalyzes the dehydration of short chain beta-hydroxyacyl-ACPs and long chain saturated and unsaturated beta-hydroxyacyl-ACPs. This is 3-hydroxyacyl-[acyl-carrier-protein] dehydratase FabZ from Chlamydia pneumoniae (Chlamydophila pneumoniae).